A 1242-amino-acid polypeptide reads, in one-letter code: MPGLYCPSSWTPLPLTDSWVRACANGPCLSVRARLTYRNPQPQPVDGVFVYPLAEAEVVSGFEAEAAGRRVSFQLQSRRRSQAACCRALGPGLGTPTPRRCAQGHLVLDLAQARSTLVLPTGIIAAAGTMTVTLHSSRELPSRPDGVLHVALPTVLTPLAPPGPPGPPRPPGLCDDSPTSCFGVGSLQEEGLAWEELAAPRDVFSGPARCPAPYTFSFEMLVTGPCLLAGLESPSHALRADAPPHASSAATICVTLAEGHHCDRALEILLHPSEPHQPHLMLEGGSLSSAEYEARVRARRDFQRLQRRDSDGDRQVWFLQRRFHKDILLNPVLALSFCPDLSSKPGHLGTATRELLFLLDSSSVAHKDAIVLAVKSLPPQTLINLAVFGTLVQPLFPESRPCSDDAVQLICESIETLQVPSGPPDVLAALDWAVGQPQHRAYPRQLFLLTAASPMAATTHRTLELMRWHRGTARCFSFGLGPTCHQLLQGLSALSRGQAYFLRPGQRLQPMLVQALRKALEPALSDISVDWFVPDTVEALLTPREIPALYPGDQLLGYCSLFRVDGFRSRPPGGQEPGWQSSGGSVFPSPEEAPSAASPGTEPTGTSEPLGTGTVSAELSSPWAARDSEQSTDALTDPVTDPGPNPSDTAIWRRIFQSSYIREQYVLTHCSASPEPGPGSTGSSESPGSQGPGSPEGSAPLEPPSQQGCRSLAWGEPAGSRSCPLPAPTPAPFKVGALSTEVLGRQHRAALAGRSLSSPPGRANQVPGRPRKPSLGAILDGPSPEPGQQLGQGLDDSGNLLSPAPMDWDMLMEPPFLFTAVPPSGELAPPAVPPQAPRCHVVIRGLCGEQPMCWEVGVGLETLWGPGDGSQPPSPPVREAAWDQALHRLTAASVVRDNEQLALRGGAETTADRGHARRCWLRALQTSKVSSAPSCFTCPVAVDATTREVLPGALQVCSSEPAEPPGTPPASHSHLDAAPLPTVVYSKGLQRGSPAGAWDSDQNGNSKRALGDPATPTEGPRRPPPRPPCRLSMGRRHKLCSPDPGQANNSEGSDHDYLPLVRLQEAPGSFRLDAPFCAAVRISQERLCRASPFAVHRASLSPTSASLPWALLGPGVGQGDSATASCSPSPSSGSEGPGQVDSGRGSDTEASEGAEGLGGTDLRGRTWATAVALAWLEHRCAAAFDEWELTAAKADCWLRAQHLPDGLDLAALKAAARGLFLLLRHWDQNLQLHLLCYSPANV.

Positions 1–138 (MPGLYCPSSW…TMTVTLHSSR (138 aa)) constitute a VIT domain. The 174-residue stretch at 354 to 527 (ELLFLLDSSS…KALEPALSDI (174 aa)) folds into the VWFA domain. Disordered stretches follow at residues 569 to 650 (SRPP…SDTA), 670 to 726 (CSAS…CPLP), 751 to 794 (LAGR…GQGL), 957 to 976 (CSSE…SHLD), 987 to 1055 (KGLQ…GSDH), and 1118 to 1159 (QGDS…GLGG). Residues 588-604 (PSPEEAPSAASPGTEPT) show a composition bias toward low complexity. Positions 605–619 (GTSEPLGTGTVSAEL) are enriched in polar residues. The segment covering 681 to 700 (TGSSESPGSQGPGSPEGSAP) has biased composition (low complexity). Low complexity predominate over residues 1125 to 1138 (SCSPSPSSGSEGPG).

This chain is von Willebrand factor A domain-containing protein 5B2 (VWA5B2), found in Homo sapiens (Human).